The sequence spans 377 residues: Chaperone protein DnaJ (377 aa).

One can recognise a J domain in the interval 3 to 67 (DYYDLLGVGR…QTRARYDQFG (65 aa)). The segment at 133–215 (GQEQEIKIPH…CGGQGVRQVR (83 aa)) adopts a CR-type zinc-finger fold. The Zn(2+) site is built by Cys-146, Cys-149, Cys-163, Cys-166, Cys-189, Cys-192, Cys-203, and Cys-206. 4 CXXCXGXG motif repeats span residues 146-153 (CDTCGGSG), 163-170 (CGTCGGAG), 189-196 (CPNCGGTG), and 203-210 (CNACGGQG).

The protein belongs to the DnaJ family. Homodimer. Zn(2+) is required as a cofactor.

The protein resides in the cytoplasm. Functionally, participates actively in the response to hyperosmotic and heat shock by preventing the aggregation of stress-denatured proteins and by disaggregating proteins, also in an autonomous, DnaK-independent fashion. Unfolded proteins bind initially to DnaJ; upon interaction with the DnaJ-bound protein, DnaK hydrolyzes its bound ATP, resulting in the formation of a stable complex. GrpE releases ADP from DnaK; ATP binding to DnaK triggers the release of the substrate protein, thus completing the reaction cycle. Several rounds of ATP-dependent interactions between DnaJ, DnaK and GrpE are required for fully efficient folding. Also involved, together with DnaK and GrpE, in the DNA replication of plasmids through activation of initiation proteins. The chain is Chaperone protein DnaJ from Parasynechococcus marenigrum (strain WH8102).